The chain runs to 223 residues: MAKHSHDHTHDHHDRPRRVRKPGEPLRIGVGGPVGSGKTALVAAICRQLRDELSLAVLTNDIYTTEDADFLRKHAVLPDSRIIAVQTGGCPHTAIRDDITANLDAIDDLIAAHDALDLILVESGGDNLTATFSSGLVDVQIFVIDVAGGDKVPRKGGPGVTFSDLLVVNKTDLAPLVGADLKVMARDAEAVRDGRPTVLQSLTEDPAATKVLDWVRSQLAAAG.

A disordered region spans residues 1-30; that stretch reads MAKHSHDHTHDHHDRPRRVRKPGEPLRIGV. Residue 32-39 participates in GTP binding; sequence GPVGSGKT.

The protein belongs to the SIMIBI class G3E GTPase family. UreG subfamily. In terms of assembly, homodimer. UreD, UreF and UreG form a complex that acts as a GTP-hydrolysis-dependent molecular chaperone, activating the urease apoprotein by helping to assemble the nickel containing metallocenter of UreC. The UreE protein probably delivers the nickel.

It is found in the cytoplasm. Functionally, facilitates the functional incorporation of the urease nickel metallocenter. This process requires GTP hydrolysis, probably effectuated by UreG. This is Urease accessory protein UreG from Mycobacterium ulcerans (strain Agy99).